The sequence spans 84 residues: Small ribosomal subunit protein uS17 (84 aa).

Belongs to the universal ribosomal protein uS17 family. Part of the 30S ribosomal subunit.

Its function is as follows. One of the primary rRNA binding proteins, it binds specifically to the 5'-end of 16S ribosomal RNA. The protein is Small ribosomal subunit protein uS17 of Clostridium botulinum (strain Eklund 17B / Type B).